Here is a 127-residue protein sequence, read N- to C-terminus: Holo-[acyl-carrier-protein] synthase (127 aa).

Mg(2+)-binding residues include D8 and E56.

It belongs to the P-Pant transferase superfamily. AcpS family. Mg(2+) is required as a cofactor.

The protein resides in the cytoplasm. The enzyme catalyses apo-[ACP] + CoA = holo-[ACP] + adenosine 3',5'-bisphosphate + H(+). In terms of biological role, transfers the 4'-phosphopantetheine moiety from coenzyme A to a Ser of acyl-carrier-protein. The sequence is that of Holo-[acyl-carrier-protein] synthase from Deinococcus deserti (strain DSM 17065 / CIP 109153 / LMG 22923 / VCD115).